The chain runs to 75 residues: Small ribosomal subunit protein bS18 (75 aa).

This sequence belongs to the bacterial ribosomal protein bS18 family. Part of the 30S ribosomal subunit. Forms a tight heterodimer with protein bS6.

Functionally, binds as a heterodimer with protein bS6 to the central domain of the 16S rRNA, where it helps stabilize the platform of the 30S subunit. This chain is Small ribosomal subunit protein bS18, found in Klebsiella pneumoniae (strain 342).